The following is a 155-amino-acid chain: Cyanate hydratase (155 aa).

Catalysis depends on residues arginine 101, glutamate 104, and serine 127.

Belongs to the cyanase family.

It catalyses the reaction cyanate + hydrogencarbonate + 3 H(+) = NH4(+) + 2 CO2. In terms of biological role, catalyzes the reaction of cyanate with bicarbonate to produce ammonia and carbon dioxide. The chain is Cyanate hydratase from Coccidioides posadasii (strain C735) (Valley fever fungus).